The sequence spans 122 residues: Large ribosomal subunit protein bL12 (122 aa).

The protein belongs to the bacterial ribosomal protein bL12 family. In terms of assembly, homodimer. Part of the ribosomal stalk of the 50S ribosomal subunit. Forms a multimeric L10(L12)X complex, where L10 forms an elongated spine to which 2 to 4 L12 dimers bind in a sequential fashion. Binds GTP-bound translation factors.

Functionally, forms part of the ribosomal stalk which helps the ribosome interact with GTP-bound translation factors. Is thus essential for accurate translation. The polypeptide is Large ribosomal subunit protein bL12 (Flavobacterium psychrophilum (strain ATCC 49511 / DSM 21280 / CIP 103535 / JIP02/86)).